We begin with the raw amino-acid sequence, 352 residues long: Threonine synthase (352 aa).

K59 is modified (N6-(pyridoxal phosphate)lysine). Pyridoxal 5'-phosphate-binding positions include N85, 185-189 (GNAGN), and T314.

This sequence belongs to the threonine synthase family. Pyridoxal 5'-phosphate serves as cofactor.

It catalyses the reaction O-phospho-L-homoserine + H2O = L-threonine + phosphate. The protein operates within amino-acid biosynthesis; L-threonine biosynthesis; L-threonine from L-aspartate: step 5/5. Functionally, catalyzes the gamma-elimination of phosphate from L-phosphohomoserine and the beta-addition of water to produce L-threonine. The sequence is that of Threonine synthase (thrC) from Bacillus sp. (strain ULM1).